Consider the following 947-residue polypeptide: MEFSWGSGQESRRLLLLLLLLAAWEAGNGQLHYSVSEEAKHGTFVGRIAQDLGLELAELVPRLFRVASKGRGGLLEVNLQNGILFVNSRIDREELCRRSAECSIHLEVIVDRPLQVFHVDVEVRDINDNPPVFPATQKNLSIAESRPLDSRFPLEGASDADIGENALLTYRLSPNEYFSLEKPPDDELVKGLGLILRKSLDREEAPEIFLVLTATDGGKPELTGTVQLLITVLDANDNAPAFDRTIYKVRLLENVPNGTLVIKLNASDLDEGLNGDIVYSFSNDISPNVKSKFHIDPITGQIIVKGYIDFEESKSYEIIVEGIDKGQLPLSGHCRVIVEVEDNNDNVPDLEFKSLSLPIREDAPLGTVIALISVSDKDMGVNGLVTCSLTSHVPFKLVSTFKNYYSLVLDSALDRESVSAYELVVTARDGGSPSLWATASVSVEVADVNDNAPAFAQPEYTVFVKENNPPGCHIFTVSAWDADAQENALVSYSLVERRVGERALSSYVSVHAESGKVYALQPLDHEELELLQFQVTARDAGVPPLGSNVTLQVFVLDENDNAPALLAPRAGGTGGAVSELVPWSVGVGHVVAKVRAVDADSGYNAWLSYELQPGTGGARIPFRVGLYTGEISTTRALDETDAPRHRLLVLVKDHGEPALTATATVLVSLVESGQAPKASSRALVGAVGPDAALVDVNVYLIIAICAVSSLLVLTLLLYTALRCSALPTEGACAPGKPTLVCSSAVGSWSYSQQRRPRVCSGEGPPKTDLMAFSPSLPDSRDREDQLQTTEESFAKPRQPNPDWRYSASLRAGMHSSVHLEEAGILRAGPGGPDQQWPTVSSATPEPEAGEVSPPVGAGVNSNSWTFKYGPGNPKQSGPGELPDKFIIPGSPAIISIRQEPTNSQIDKSDFITFGKKEETKKKKKKKKGNKTQEKKEKGNSTTDNSDQ.

A signal peptide spans 1-29 (MEFSWGSGQESRRLLLLLLLLAAWEAGNG). Cadherin domains lie at 30-133 (QLHY…PPVF), 134-242 (PATQ…APAF), 243-350 (DRTI…VPDL), 351-455 (EFKS…APAF), 456-565 (AQPE…APAL), and 588-678 (GHVV…APKA). Over 30–697 (QLHYSVSEEA…GPDAALVDVN (668 aa)) the chain is Extracellular. A disulfide bond links cysteine 96 and cysteine 102. N-linked (GlcNAc...) asparagine glycosylation is found at asparagine 139, asparagine 257, and asparagine 265. An N-linked (GlcNAc...) asparagine glycan is attached at asparagine 548. Residues 698–718 (VYLIIAICAVSSLLVLTLLLY) traverse the membrane as a helical segment. Residues 719-947 (TALRCSALPT…GNSTTDNSDQ (229 aa)) lie on the Cytoplasmic side of the membrane. PXXP repeat units lie at residues 734–737 (PGKP), 774–777 (PSLP), 796–799 (PRQP), 829–832 (PGGP), 870–873 (PGNP), and 888–891 (PGSP). Residues 734 to 891 (PGKPTLVCSS…PDKFIIPGSP (158 aa)) are 6 X 4 AA repeats of P-X-X-P. Residues 738 to 947 (TLVCSSAVGS…GNSTTDNSDQ (210 aa)) are required for interaction with FYN. 3 disordered regions span residues 754 to 805 (RRPR…DWRY), 828 to 853 (GPGG…EVSP), and 868 to 947 (YGPG…NSDQ). Positions 906–920 (DKSDFITFGKKEETK) are enriched in basic and acidic residues.

Forms homodimers in trans (molecules expressed by two different cells). Forms promiscuous heterodimers in cis (at the plasma membrane of the same cell) with other protocadherins. Interacts with FYN.

It is found in the cell membrane. Functionally, calcium-dependent cell-adhesion protein involved in cells self-recognition and non-self discrimination. Thereby, it is involved in the establishment and maintenance of specific neuronal connections in the brain. The protein is Protocadherin alpha-4 of Homo sapiens (Human).